The primary structure comprises 329 residues: Neuropeptides B/W receptor type 1 (329 aa).

The Extracellular segment spans residues 1–39; it reads MHNLSLFEPGRGNVSCGGPFLGCPNESNPAPLPLPQPLA. Asn-3, Asn-13, and Asn-25 each carry an N-linked (GlcNAc...) asparagine glycan. A helical membrane pass occupies residues 40-63; the sequence is VAVPVVYGVICAVGLAGNSAVLYV. Residues 64–74 lie on the Cytoplasmic side of the membrane; it reads LLRTPRMKTVT. A helical transmembrane segment spans residues 75 to 99; that stretch reads NVFILNLAIADELFTLVLPINIADF. At 100–114 the chain is on the extracellular side; sequence LLRRWPFGEVMCKLI. Cys-111 and Cys-190 are disulfide-bonded. A helical membrane pass occupies residues 115 to 134; the sequence is VAVDQYNTFSSLYFLAVMSA. The Cytoplasmic segment spans residues 135 to 159; the sequence is DRYLVVLATAESRRVSGRTYGAARA. Residues 160–179 traverse the membrane as a helical segment; it reads VSLAVWALVTLVVLPFAVFA. Over 180–204 the chain is Extracellular; it reads RLDEEQGRRQCVLVFPQPEAFWWRA. A helical membrane pass occupies residues 205 to 226; it reads SRLYTLVLGFAIPVSTICALYI. Residues 227-250 are Cytoplasmic-facing; that stretch reads TLLCRLRAIQLDSHAKALDRAKKR. Residues 251-275 form a helical membrane-spanning segment; that stretch reads VTLLVVAILAVCLLCWTPYHLSTIV. The Extracellular portion of the chain corresponds to 276 to 285; it reads ALTTDLPQTP. Residues 286 to 300 form a helical membrane-spanning segment; that stretch reads LVIGISYFITSLSYA. Over 301–329 the chain is Cytoplasmic; that stretch reads NSCLNPFLYAFLDDSFRRSLRQLVSCRTA.

This sequence belongs to the G-protein coupled receptor 1 family.

Its subcellular location is the cell membrane. Interacts specifically with a number of opioid ligands. Receptor for neuropeptides B and W, which may be involved in neuroendocrine system regulation, food intake and the organization of other signals. The protein is Neuropeptides B/W receptor type 1 (Npbwr1) of Rattus norvegicus (Rat).